Here is a 242-residue protein sequence, read N- to C-terminus: Protein ABHD14A (242 aa).

Residues 6–26 (AALLGLGLLLMFLLYMGLPGP) form a helical; Signal-anchor for type II membrane protein membrane-spanning segment. Asn-38 is a glycosylation site (N-linked (GlcNAc...) asparagine). Residues Ser-142, Asp-193, and His-220 each act as charge relay system in the active site.

Belongs to the AB hydrolase superfamily. ABHD14 family.

It is found in the cytoplasm. The protein localises to the membrane. Possible role in granule neuron development. The polypeptide is Protein ABHD14A (Rattus norvegicus (Rat)).